The sequence spans 703 residues: Calpain-8 (703 aa).

The 300-residue stretch at 45–344 (LFKDPEFPAC…FSRLEICNLS (300 aa)) folds into the Calpain catalytic domain. Catalysis depends on residues Cys-105, His-262, and Asn-286. The interval 355–512 (KWNLVLFNGR…VFSEKKAQAL (158 aa)) is domain III. Positions 513–531 (EIGDAVPGDPHEPHPRDMD) are linker. EF-hand domains lie at 531–566 (DGED…LLSK), 575–610 (FNIN…ICKY), 605–640 (LKIC…AGFT), and 670–703 (IRLE…RALV). The segment at 532 to 703 (GEDEHFWSLS…LAEWLCRALV (172 aa)) is domain IV. Residues Asp-588, Asp-590, Thr-592, Ser-594, Glu-599, Asp-618, Ser-620, Thr-624, and Glu-629 each coordinate Ca(2+).

The protein belongs to the peptidase C2 family. In terms of assembly, monomer and homooligomer. Interacts with COPS1/GPS1, COPB1, EYA2, NME2, NME4 and TOMM70. The cofactor is Ca(2+). In terms of processing, undergoes autolytic cleavage between Ala-5 and Ala-6 which gives rise to fragments extending from Ala-6 to the C-terminus, Ala-6 to the EF-hand 2 domain and from Ala-6 to the beginning of domain III. Predominantly expressed in the stomach. Localizes strictly to the surface mucus cells in the gastric epithelium and the mucus-secreting goblet cells in the duodenum.

Its subcellular location is the cytoplasm. The protein resides in the golgi apparatus. It carries out the reaction Broad endopeptidase specificity.. With respect to regulation, the concentration of calcium for half-maximal activity is 0.3 mM. Inhibited by calpastatin and calpeptin. In terms of biological role, calcium-regulated non-lysosomal thiol-protease. Involved in membrane trafficking in the gastric surface mucus cells (pit cells) and may involve the membrane trafficking of mucus cells via interactions with coat protein. Proteolytically cleaves the beta-subunit of coatomer complex. The chain is Calpain-8 (Capn8) from Mus musculus (Mouse).